A 249-amino-acid polypeptide reads, in one-letter code: Aquaporin TIP4-3 (249 aa).

Helical transmembrane passes span 20–40 and 56–76; these read GVLG…GAAM and TAVA…GFHI. The NPA 1 signature appears at 82–84; it reads NPA. Transmembrane regions (helical) follow at residues 100-122, 141-161, and 169-189; these read SSLY…RWLT, GVVA…ATIL, and GAGP…GAAL. An NPA 2 motif is present at residues 195-197; that stretch reads NPA. A helical transmembrane segment spans residues 214-234; it reads VYWVGPLAGGPLAVLVYECCF.

The protein belongs to the MIP/aquaporin (TC 1.A.8) family. TIP (TC 1.A.8.10) subfamily.

It is found in the vacuole membrane. Its function is as follows. Aquaporins facilitate the transport of water and small neutral solutes across cell membranes. The protein is Aquaporin TIP4-3 (TIP4-3) of Zea mays (Maize).